Consider the following 494-residue polypeptide: Flap endonuclease 1 (494 aa).

An N-domain region spans residues 1-106; the sequence is MGIKGLIPFL…KTLEKRRQQR (106 aa). D34 contributes to the Mg(2+) binding site. Residues R47 and R72 each coordinate DNA. Residues D88, E160, E162, D181, and D183 each coordinate Mg(2+). An I-domain region spans residues 124–253; the sequence is SVKKLVGRTV…KTAYSLVKKY (130 aa). Residue E160 coordinates DNA. G231 and D233 together coordinate DNA. D233 is a binding site for Mg(2+). The interval 330-338 is interaction with PCNA; it reads IQTSLLSFL. Disordered stretches follow at residues 341 to 382 and 395 to 426; these read PQHN…ESST and LFCE…ENET. Basic and acidic residues predominate over residues 408–426; it reads DRGRVDKNEDLFKKSENET.

It belongs to the XPG/RAD2 endonuclease family. FEN1 subfamily. Interacts with PCNA. Three molecules of FEN1 bind to one PCNA trimer with each molecule binding to one PCNA monomer. PCNA stimulates the nuclease activity without altering cleavage specificity. It depends on Mg(2+) as a cofactor. Phosphorylated. Phosphorylation upon DNA damage induces relocalization to the nuclear plasma.

It localises to the nucleus. The protein resides in the nucleolus. It is found in the nucleoplasm. Its subcellular location is the mitochondrion. Its function is as follows. Structure-specific nuclease with 5'-flap endonuclease and 5'-3' exonuclease activities involved in DNA replication and repair. During DNA replication, cleaves the 5'-overhanging flap structure that is generated by displacement synthesis when DNA polymerase encounters the 5'-end of a downstream Okazaki fragment. It enters the flap from the 5'-end and then tracks to cleave the flap base, leaving a nick for ligation. Also involved in the long patch base excision repair (LP-BER) pathway, by cleaving within the apurinic/apyrimidinic (AP) site-terminated flap. Acts as a genome stabilization factor that prevents flaps from equilibrating into structures that lead to duplications and deletions. Also possesses 5'-3' exonuclease activity on nicked or gapped double-stranded DNA, and exhibits RNase H activity. Also involved in replication and repair of rDNA and in repairing mitochondrial DNA. This is Flap endonuclease 1 from Theileria parva (East coast fever infection agent).